Here is a 201-residue protein sequence, read N- to C-terminus: Recombination protein RecR (201 aa).

A C4-type zinc finger spans residues Cys58–Cys73. A Toprim domain is found at Thr81 to Pro176.

The protein belongs to the RecR family.

May play a role in DNA repair. It seems to be involved in an RecBC-independent recombinational process of DNA repair. It may act with RecF and RecO. The sequence is that of Recombination protein RecR from Halorhodospira halophila (strain DSM 244 / SL1) (Ectothiorhodospira halophila (strain DSM 244 / SL1)).